Reading from the N-terminus, the 353-residue chain is UPF0283 membrane protein YcjF (353 aa).

Transmembrane regions (helical) follow at residues M70–T90, V100–V120, and E213–W233.

This sequence belongs to the UPF0283 family.

The protein resides in the cell inner membrane. The chain is UPF0283 membrane protein YcjF from Salmonella schwarzengrund (strain CVM19633).